The sequence spans 437 residues: Lipid II isoglutaminyl synthase (glutamine-hydrolyzing) subunit MurT (437 aa).

Residues Cys202, Cys205, Cys224, and Cys226 each coordinate Zn(2+). The active site involves Asp349.

The protein belongs to the MurCDEF family. MurT subfamily. In terms of assembly, forms a heterodimer with GatD.

The catalysed reaction is beta-D-GlcNAc-(1-&gt;4)-Mur2Ac(oyl-L-Ala-gamma-D-Glu-L-Lys-D-Ala-D-Ala)-di-trans,octa-cis-undecaprenyl diphosphate + L-glutamine + ATP + H2O = beta-D-GlcNAc-(1-&gt;4)-Mur2Ac(oyl-L-Ala-D-isoglutaminyl-L-Lys-D-Ala-D-Ala)-di-trans,octa-cis-undecaprenyl diphosphate + L-glutamate + ADP + phosphate + H(+). The enzyme catalyses beta-D-GlcNAc-(1-&gt;4)-Mur2Ac(oyl-L-Ala-gamma-D-Glu-L-Lys-D-Ala-D-Ala)-di-trans,octa-cis-undecaprenyl diphosphate + ATP = beta-D-GlcNAc-(1-&gt;4)-Mur2Ac(oyl-L-Ala-gamma-D-O-P-Glu-L-Lys-D-Ala-D-Ala)-di-trans,octa-cis-undecaprenyl diphosphate + ADP. It catalyses the reaction beta-D-GlcNAc-(1-&gt;4)-Mur2Ac(oyl-L-Ala-gamma-D-O-P-Glu-L-Lys-D-Ala-D-Ala)-di-trans,octa-cis-undecaprenyl diphosphate + NH4(+) = beta-D-GlcNAc-(1-&gt;4)-Mur2Ac(oyl-L-Ala-D-isoglutaminyl-L-Lys-D-Ala-D-Ala)-di-trans,octa-cis-undecaprenyl diphosphate + phosphate + H(+). The protein operates within cell wall biogenesis; peptidoglycan biosynthesis. In terms of biological role, the lipid II isoglutaminyl synthase complex catalyzes the formation of alpha-D-isoglutamine in the cell wall lipid II stem peptide. The MurT subunit catalyzes the ATP-dependent amidation of D-glutamate residue of lipid II, converting it to an isoglutamine residue. This chain is Lipid II isoglutaminyl synthase (glutamine-hydrolyzing) subunit MurT, found in Staphylococcus aureus (strain N315).